Here is a 249-residue protein sequence, read N- to C-terminus: Ribonuclease 3 (249 aa).

Positions 21–149 constitute an RNase III domain; it reads VDHQPLIDAL…LLGAIYLAHG (129 aa). E62 is a binding site for Mg(2+). D66 is a catalytic residue. Mg(2+)-binding residues include D135 and E138. The active site involves E138. Positions 176 to 244 constitute a DRBM domain; that stretch reads DWKTTLQERL…AHKAVGFLQD (69 aa).

This sequence belongs to the ribonuclease III family. Homodimer. It depends on Mg(2+) as a cofactor.

It is found in the cytoplasm. The catalysed reaction is Endonucleolytic cleavage to 5'-phosphomonoester.. In terms of biological role, digests double-stranded RNA. Involved in the processing of primary rRNA transcript to yield the immediate precursors to the large and small rRNAs (23S and 16S). Processes some mRNAs, and tRNAs when they are encoded in the rRNA operon. Processes pre-crRNA and tracrRNA of type II CRISPR loci if present in the organism. This Corynebacterium diphtheriae (strain ATCC 700971 / NCTC 13129 / Biotype gravis) protein is Ribonuclease 3.